A 108-amino-acid polypeptide reads, in one-letter code: UPF0145 protein YjfJ (108 aa).

The protein belongs to the UPF0145 family.

The protein is UPF0145 protein YjfJ (yjfJ) of Lactococcus lactis subsp. lactis (strain IL1403) (Streptococcus lactis).